The primary structure comprises 523 residues: 2-isopropylmalate synthase (523 aa).

One can recognise a Pyruvate carboxyltransferase domain in the interval 5–267; it reads VIIFDTTLRD…HTNINHHEIW (263 aa). Residues D14, H202, H204, and N238 each coordinate Mn(2+). A regulatory domain region spans residues 392-523; sequence RLDYFSVQSG…QNKENNKETV (132 aa).

The protein belongs to the alpha-IPM synthase/homocitrate synthase family. LeuA type 1 subfamily. Homodimer. Requires Mn(2+) as cofactor.

Its subcellular location is the cytoplasm. It catalyses the reaction 3-methyl-2-oxobutanoate + acetyl-CoA + H2O = (2S)-2-isopropylmalate + CoA + H(+). It functions in the pathway amino-acid biosynthesis; L-leucine biosynthesis; L-leucine from 3-methyl-2-oxobutanoate: step 1/4. In terms of biological role, catalyzes the condensation of the acetyl group of acetyl-CoA with 3-methyl-2-oxobutanoate (2-ketoisovalerate) to form 3-carboxy-3-hydroxy-4-methylpentanoate (2-isopropylmalate). This Salmonella choleraesuis (strain SC-B67) protein is 2-isopropylmalate synthase.